We begin with the raw amino-acid sequence, 495 residues long: Lysine--tRNA ligase (495 aa).

2 residues coordinate Mg(2+): Glu406 and Glu413.

It belongs to the class-II aminoacyl-tRNA synthetase family. As to quaternary structure, homodimer. It depends on Mg(2+) as a cofactor.

Its subcellular location is the cytoplasm. The catalysed reaction is tRNA(Lys) + L-lysine + ATP = L-lysyl-tRNA(Lys) + AMP + diphosphate. This chain is Lysine--tRNA ligase, found in Leuconostoc mesenteroides subsp. mesenteroides (strain ATCC 8293 / DSM 20343 / BCRC 11652 / CCM 1803 / JCM 6124 / NCDO 523 / NBRC 100496 / NCIMB 8023 / NCTC 12954 / NRRL B-1118 / 37Y).